The primary structure comprises 245 residues: 1-(5-phosphoribosyl)-5-[(5-phosphoribosylamino)methylideneamino] imidazole-4-carboxamide isomerase (245 aa).

Residue Asp7 is the Proton acceptor of the active site. Asp129 serves as the catalytic Proton donor.

It belongs to the HisA/HisF family.

The protein localises to the cytoplasm. It catalyses the reaction 1-(5-phospho-beta-D-ribosyl)-5-[(5-phospho-beta-D-ribosylamino)methylideneamino]imidazole-4-carboxamide = 5-[(5-phospho-1-deoxy-D-ribulos-1-ylimino)methylamino]-1-(5-phospho-beta-D-ribosyl)imidazole-4-carboxamide. It participates in amino-acid biosynthesis; L-histidine biosynthesis; L-histidine from 5-phospho-alpha-D-ribose 1-diphosphate: step 4/9. The sequence is that of 1-(5-phosphoribosyl)-5-[(5-phosphoribosylamino)methylideneamino] imidazole-4-carboxamide isomerase from Cronobacter sakazakii (strain ATCC BAA-894) (Enterobacter sakazakii).